The sequence spans 794 residues: Tail tubular protein gp12 (794 aa).

As to quaternary structure, interacts with head-to-tail connector protein gp8, the tail component gp11, and the fiber protein gp17.

It localises to the virion. Structural component of the short non-contractile tail. The tail complex is involved in viral genome delivery. Forms the end of the tail, including the canonical tube, the nozzle, and the small extensions below the fibers. Once the tail tubular structure is formed, the interface between gp11 and gp12 generates the proper environment to interact with the six gp17 trimers. This Escherichia coli (Bacteriophage T7) protein is Tail tubular protein gp12.